Consider the following 122-residue polypeptide: Large ribosomal subunit protein uL14 (122 aa).

This sequence belongs to the universal ribosomal protein uL14 family. In terms of assembly, part of the 50S ribosomal subunit. Forms a cluster with proteins L3 and L19. In the 70S ribosome, L14 and L19 interact and together make contacts with the 16S rRNA in bridges B5 and B8.

Functionally, binds to 23S rRNA. Forms part of two intersubunit bridges in the 70S ribosome. The sequence is that of Large ribosomal subunit protein uL14 from Dechloromonas aromatica (strain RCB).